We begin with the raw amino-acid sequence, 287 residues long: Arylamine N-acetyltransferase, liver isozyme (287 aa).

Cysteine 68 functions as the Acyl-thioester intermediate in the catalytic mechanism. Residues histidine 107 and aspartate 122 contribute to the active site.

Belongs to the arylamine N-acetyltransferase family.

It carries out the reaction an arylamine + acetyl-CoA = an N-acetylarylamine + CoA. In Gallus gallus (Chicken), this protein is Arylamine N-acetyltransferase, liver isozyme.